We begin with the raw amino-acid sequence, 298 residues long: Plasmodesmata-located protein 7 (298 aa).

A signal peptide spans 1–30; the sequence is MPMAKLRNIIKTLSIFFFLIAATAPSLSSA. Topologically, residues 31–258 are extracellular; the sequence is TSATDTFVFG…YKTNYGGEKT (228 aa). Gnk2-homologous domains lie at 35 to 139 and 140 to 240; these read DTFV…NISF and LGQE…TDGA. Cystine bridges form between Cys42-Cys117, Cys93-Cys102, Cys105-Cys130, Cys152-Cys218, Cys194-Cys203, and Cys206-Cys231. Residues 259-279 traverse the membrane as a helical segment; that stretch reads FAIIIGLLAAVVLLIIFLLFL. Positions 259-279 are necessary and sufficient for plasmodesmal targeting; sequence FAIIIGLLAAVVLLIIFLLFL. Residues 280–298 are Cytoplasmic-facing; sequence RGVCSRGGDFSILHSFTLI.

This sequence belongs to the cysteine-rich repeat secretory protein family. Plasmodesmata-located proteins (PDLD) subfamily. (Microbial infection) Interacts with Grapevine fanleaf virus (GFLV) 2B-MP. Highly expressed in lateral root and elongation zone.

Its subcellular location is the cell membrane. The protein localises to the cell junction. The protein resides in the plasmodesma. Its function is as follows. Modulates cell-to-cell trafficking. The sequence is that of Plasmodesmata-located protein 7 from Arabidopsis thaliana (Mouse-ear cress).